The sequence spans 441 residues: Xylose isomerase (441 aa).

Active-site residues include His99 and Asp102. Glu230, Glu266, His269, Asp294, Asp305, Asp307, and Asp337 together coordinate Mg(2+).

The protein belongs to the xylose isomerase family. Homotetramer. Mg(2+) serves as cofactor.

It localises to the cytoplasm. It catalyses the reaction alpha-D-xylose = alpha-D-xylulofuranose. In terms of biological role, exhibits xylose isomerase activity. The protein is Xylose isomerase (xylA) of Bacillus sp. (strain LW2).